A 1158-amino-acid polypeptide reads, in one-letter code: MINVITGRQVDNLQNEIIDQAVKSYYQDKTHDVFIIVPNHIKFTTEVRALSKLSVLTNKKQVAVNKLHILSFSRLAWYFLKDEAIKLPQILDDAASVMLLEQIVKDHQDELKLFQNKNQITSGALRQMYEAILSVRAGNIDLENIDNEKLNEETSYKVHDLQIIYDDFIDRLSEKFATKDEMQLLLNEFLAKSDSLSTMVFYFSDFSHFSLQELTSVRLISKKAKNTTLAFKTKIGKIDSKAEQGDYDYVVQRTIRQLEHFWQNQQLNYQTTEFPLTKTNPSSLLNGVWTKTNGFDESLSKFLQPVKADSRYAEAYFVARTIYQQVALNNYRYQDFLVLAPNLNEYETYLTPILRQNNIPFFNDLQKEMKYHPLVVAVENLQQIFKRGFQTDNVIALMKTQLFIPEWYKSVARYQNDVDLLENFVLAHGIKGELWKKPLKSFVDAEVIALDKSEQEVEELDRLRKYFISILSEFFEDIETEKDPQAGVTIFWNFLIKNRVAKRLEAWRKEANDAGDLQLAQQPEQVWSTLNDLLKDYLLVAKEFSLEQFFDLLISGFSEANFSQIPSTLDAVNISEMGMVQGQGYKQVFIIGATSSNLPQIEKIPGFFSSENLEQLNDGNNASGYLEDQQKINNLDQNYQFGNALSLASDKIYISYPVINTANEQLEPSIFYKQLLRLTQANEFSQHDLPSSAGDLLTFMTNPEASLGYLTYLKGKQEVNVDSILELTEQEIGEVAQNVLEGSNFKNVPENLPPKLAQELYGDRIETSVSQLETYYQNSFEYFLNYGLHLKKRFENELDVIQAGNYYHETFDYLVKKIKEKNLDFADLTDSKLNQLLIEVREELKEKGRYRQLLNDPFNKYLFHKLDQTTSNVAHYWHSNVNKTTFRPQYSELSFGKNQKVTGLSYSWKDENNQKKIVDLRGKMDRVDLAKVNDRVLGEVIDYKSSAKKFDLGLFANGISMQMISYLEVLKKNNKFFAQGKNLDVLGAFYQNITSSLERLSSDKMILSNYQIKDLLKESTKKLMYNGILVADEEILDLIEPGMEKDRATSEIYSSIKRKVNGDISWPRNQSFTPDQLELLLAYNSYLIKNAGSEILSGKIKLDPYTYGQQSSLTYSDFKDIFFFDAMLKENNYHKIKAIDKKTLLNLIKEKLDLDGDE.

The protein belongs to the helicase family. AddB/RexB type 2 subfamily. As to quaternary structure, heterodimer of AddA and RexB. Mg(2+) serves as cofactor.

The heterodimer acts as both an ATP-dependent DNA helicase and an ATP-dependent, dual-direction single-stranded exonuclease. Recognizes the chi site generating a DNA molecule suitable for the initiation of homologous recombination. This subunit has 5' -&gt; 3' nuclease activity but not helicase activity. This Lactobacillus gasseri (strain ATCC 33323 / DSM 20243 / BCRC 14619 / CIP 102991 / JCM 1131 / KCTC 3163 / NCIMB 11718 / NCTC 13722 / AM63) protein is ATP-dependent helicase/deoxyribonuclease subunit B.